The following is a 143-amino-acid chain: UPF0201 protein Pcal_0593 (143 aa).

The protein belongs to the UPF0201 family.

This chain is UPF0201 protein Pcal_0593, found in Pyrobaculum calidifontis (strain DSM 21063 / JCM 11548 / VA1).